The primary structure comprises 181 residues: MKFLFDLFPIILFFATYKIYGIYSATAVAIVATFAQIGWVWLRHRKVDNMLWVSLAIIIVFGGATLILQDETFIKWKPTVLYWLFAVILFLAHSFFGKNLIRAMMKDQIKLPEPVWVRLNISWSVFFGAMGALNLYVAYNYSTDTWVNFKLFGFMGLMFVFIILQALLLGKYMEKNDNQKI.

The next 5 membrane-spanning stretches (helical) occupy residues 24 to 44, 49 to 69, 81 to 101, 119 to 139, and 149 to 169; these read SATA…WLRH, NMLW…LILQ, LYWL…KNLI, LNIS…YVAY, and FKLF…ALLL.

It belongs to the YciB family.

Its subcellular location is the cell inner membrane. Functionally, plays a role in cell envelope biogenesis, maintenance of cell envelope integrity and membrane homeostasis. The chain is Inner membrane-spanning protein YciB from Nitrosomonas eutropha (strain DSM 101675 / C91 / Nm57).